Reading from the N-terminus, the 177-residue chain is Calcium-binding protein CML38 (177 aa).

The span at 1-11 (MKNNTQPQSSF) shows a compositional bias: polar residues. The tract at residues 1 to 44 (MKNNTQPQSSFKKLCRKLSPKREDSAGEIQQHNSSNGEDKNREL) is disordered. EF-hand domains follow at residues 39–74 (DKNRELEAVFSYMDANRDGRISPEELQKSFMTLGEQ), 75–110 (LSDEEAVAAVRLSDTDGDGMLDFEEFSQLIKVDDEE), 111–146 (EKKMELKGAFRLYIAEGEDCITPRSLKMMLKKLGES), and 147–177 (RTTDDCRVMISAFDLNADGVLSFDEFALMMR). Ca(2+) contacts are provided by aspartate 52, asparagine 54, aspartate 56, arginine 58, glutamate 63, aspartate 88, aspartate 90, aspartate 92, methionine 94, and glutamate 99. The Ca(2+) site is built by aspartate 160, asparagine 162, aspartate 164, and glutamate 171.

Binds to ABCG36. Expressed in cotyledons and guard cells of young leaves. In mature root, expressed in the epidermis, trichoblasts, young lateral root and root tip. Expressed from stage 9 to 15 of flower development in anther wall.

Functionally, potential calcium sensor that binds calcium in vitro. This Arabidopsis thaliana (Mouse-ear cress) protein is Calcium-binding protein CML38.